The chain runs to 99 residues: Large ribosomal subunit protein bL21 (99 aa).

It belongs to the bacterial ribosomal protein bL21 family. In terms of assembly, part of the 50S ribosomal subunit. Contacts protein L20.

This protein binds to 23S rRNA in the presence of protein L20. This is Large ribosomal subunit protein bL21 from Mesomycoplasma hyopneumoniae (strain 232) (Mycoplasma hyopneumoniae).